The sequence spans 275 residues: Ribosomal RNA small subunit methyltransferase A (275 aa).

6 residues coordinate S-adenosyl-L-methionine: N28, L30, G55, E77, D103, and N123.

It belongs to the class I-like SAM-binding methyltransferase superfamily. rRNA adenine N(6)-methyltransferase family. RsmA subfamily.

It is found in the cytoplasm. The catalysed reaction is adenosine(1518)/adenosine(1519) in 16S rRNA + 4 S-adenosyl-L-methionine = N(6)-dimethyladenosine(1518)/N(6)-dimethyladenosine(1519) in 16S rRNA + 4 S-adenosyl-L-homocysteine + 4 H(+). In terms of biological role, specifically dimethylates two adjacent adenosines (A1518 and A1519) in the loop of a conserved hairpin near the 3'-end of 16S rRNA in the 30S particle. May play a critical role in biogenesis of 30S subunits. The chain is Ribosomal RNA small subunit methyltransferase A from Rhizobium johnstonii (strain DSM 114642 / LMG 32736 / 3841) (Rhizobium leguminosarum bv. viciae).